The following is a 294-amino-acid chain: Cyclin-dependent kinase A-1 (294 aa).

Residues 4 to 287 form the Protein kinase domain; that stretch reads YEKEEKIGEG…ARQALEHEYF (284 aa). Residues 10 to 18 and lysine 33 contribute to the ATP site; that span reads IGEGTYGVV. Threonine 14 is subject to Phosphothreonine. Residue tyrosine 15 is modified to Phosphotyrosine. Residue aspartate 127 is the Proton acceptor of the active site. At threonine 161 the chain carries Phosphothreonine; by CAK.

Belongs to the protein kinase superfamily. CMGC Ser/Thr protein kinase family. CDC2/CDKX subfamily. Phosphorylated at Thr-161 by CDKD-1. As to expression, expressed in the dividing region of the root apex and in differentiated cells such as those in the sclerenchyma, pericycle and parenchyma of the central cylinder.

It carries out the reaction L-seryl-[protein] + ATP = O-phospho-L-seryl-[protein] + ADP + H(+). It catalyses the reaction L-threonyl-[protein] + ATP = O-phospho-L-threonyl-[protein] + ADP + H(+). The catalysed reaction is [DNA-directed RNA polymerase] + ATP = phospho-[DNA-directed RNA polymerase] + ADP + H(+). The protein is Cyclin-dependent kinase A-1 (CDKA-1) of Oryza sativa subsp. japonica (Rice).